The chain runs to 150 residues: uncharacterized protein (150 aa).

Residues 75-150 (RAPQNPPPPG…LLDAVAAAET (76 aa)) are disordered. Residues 86 to 103 (QRNLPLRRLPALPAAPEA) show a composition bias toward low complexity.

This is an uncharacterized protein from Homo sapiens (Human).